A 322-amino-acid polypeptide reads, in one-letter code: MDTSSINAQSIFDDNAATLKLSWLTGHEGWERGFSSESVANATSSADLVGHLNLIHPNRIQVLGDAEIDYYKRQTDEDRSRHMAELIALEPPFLVVAGGVPAPPELVLRCTRSSTPLFTTPMSAAAVIDSLRLYMSRILAPRATLHGVFLDILGMGVLLTGDSGLGKSELGLELISRGHGLVADDAVDFVRLGPDFVEGRCPPLLQNLLEVRGLGLLDIKTIFGETAVRRKMKLKLIVQLVRRPDGEFQRLPLESQTVDVLGLPISKVTIQVAAGRNLAVLVEAAVRNTILQLRGIDTLRDFMDRQRLAMQDPDSQFPGKLI.

Active-site residues include histidine 146 and lysine 167. 161–168 contacts ATP; the sequence is GDSGLGKS. Serine 168 contacts Mg(2+). Residue aspartate 185 is the Proton acceptor; for phosphorylation activity. Proton donor; for dephosphorylation activity of the active site. The tract at residues 209–218 is important for the catalytic mechanism of both phosphorylation and dephosphorylation; that stretch reads LEVRGLGLLD. A Mg(2+)-binding site is contributed by glutamate 210. Residue arginine 250 is part of the active site. The interval 271-276 is important for the catalytic mechanism of dephosphorylation; the sequence is QVAAGR.

It belongs to the HPrK/P family. Homohexamer. Requires Mg(2+) as cofactor.

The enzyme catalyses [HPr protein]-L-serine + ATP = [HPr protein]-O-phospho-L-serine + ADP + H(+). The catalysed reaction is [HPr protein]-O-phospho-L-serine + phosphate + H(+) = [HPr protein]-L-serine + diphosphate. Functionally, catalyzes the ATP- as well as the pyrophosphate-dependent phosphorylation of a specific serine residue in HPr, a phosphocarrier protein of the phosphoenolpyruvate-dependent sugar phosphotransferase system (PTS). HprK/P also catalyzes the pyrophosphate-producing, inorganic phosphate-dependent dephosphorylation (phosphorolysis) of seryl-phosphorylated HPr (P-Ser-HPr). The polypeptide is HPr kinase/phosphorylase (Paraburkholderia xenovorans (strain LB400)).